The chain runs to 438 residues: Xylose isomerase (438 aa).

Residues His100 and Asp103 contribute to the active site. Positions 231, 267, 270, 295, 306, 308, and 338 each coordinate Mg(2+).

The protein belongs to the xylose isomerase family. As to quaternary structure, homotetramer. Requires Mg(2+) as cofactor.

The protein localises to the cytoplasm. The catalysed reaction is alpha-D-xylose = alpha-D-xylulofuranose. The protein is Xylose isomerase of Pseudomonas syringae pv. tomato (strain ATCC BAA-871 / DC3000).